We begin with the raw amino-acid sequence, 79 residues long: Exodeoxyribonuclease 7 small subunit (79 aa).

Belongs to the XseB family. In terms of assembly, heterooligomer composed of large and small subunits.

The protein resides in the cytoplasm. The catalysed reaction is Exonucleolytic cleavage in either 5'- to 3'- or 3'- to 5'-direction to yield nucleoside 5'-phosphates.. Its function is as follows. Bidirectionally degrades single-stranded DNA into large acid-insoluble oligonucleotides, which are then degraded further into small acid-soluble oligonucleotides. The protein is Exodeoxyribonuclease 7 small subunit of Lactococcus lactis subsp. cremoris (strain MG1363).